A 267-amino-acid chain; its full sequence is Cerberus (267 aa).

The N-terminal stretch at 1–17 is a signal peptide; that stretch reads MHLLLFQLLVLLPLGKT. Disordered stretches follow at residues 19–52 and 87–113; these read RHQD…EAEE and WKKP…QSLI. Asn26 carries an N-linked (GlcNAc...) asparagine glycan. Positions 88 to 101 are enriched in basic and acidic residues; sequence KKPEREMHPSRDSD. 4 disulfides stabilise this stretch: Cys162–Cys209, Cys176–Cys223, Cys186–Cys239, and Cys190–Cys241. The CTCK domain maps to 162–246; that stretch reads CRTVPFSQTI…EECQCKVKTE (85 aa). N-linked (GlcNAc...) asparagine glycosylation occurs at Asn222.

This sequence belongs to the DAN family. As to quaternary structure, forms monomers and predominantly dimers. N-glycosylated.

The protein localises to the secreted. In terms of biological role, cytokine that may play a role in anterior neural induction and somite formation during embryogenesis in part through a BMP-inhibitory mechanism. Can regulate Nodal signaling during gastrulation as well as the formation and patterning of the primitive streak. In Homo sapiens (Human), this protein is Cerberus (CER1).